A 214-amino-acid polypeptide reads, in one-letter code: 3-isopropylmalate dehydratase small subunit (214 aa).

This sequence belongs to the LeuD family. LeuD type 1 subfamily. Heterodimer of LeuC and LeuD.

The enzyme catalyses (2R,3S)-3-isopropylmalate = (2S)-2-isopropylmalate. It participates in amino-acid biosynthesis; L-leucine biosynthesis; L-leucine from 3-methyl-2-oxobutanoate: step 2/4. In terms of biological role, catalyzes the isomerization between 2-isopropylmalate and 3-isopropylmalate, via the formation of 2-isopropylmaleate. The polypeptide is 3-isopropylmalate dehydratase small subunit (Pseudomonas putida (strain ATCC 47054 / DSM 6125 / CFBP 8728 / NCIMB 11950 / KT2440)).